A 182-amino-acid polypeptide reads, in one-letter code: Troponin I, fast skeletal muscle (182 aa).

Glycine 2 carries the post-translational modification N-acetylglycine. Residues 2 to 48 (GDEEKRNRAITARRQHLKSVMLQIAATELEKEEGRREAEKQNYLAEH) form an involved in binding TNC region. At threonine 12 the chain carries Phosphothreonine; by PHK. The interval 97 to 117 (NQKLFDLRGKFKRPPLRRVRM) is involved in binding TNC and actin. Serine 118 is modified (phosphoserine; by PKA).

It belongs to the troponin I family. As to quaternary structure, binds to actin and tropomyosin.

Its function is as follows. Troponin I is the inhibitory subunit of troponin, the thin filament regulatory complex which confers calcium-sensitivity to striated muscle actomyosin ATPase activity. This is Troponin I, fast skeletal muscle (TNNI2) from Oryctolagus cuniculus (Rabbit).